The primary structure comprises 177 residues: RNA pyrophosphohydrolase (177 aa).

One can recognise a Nudix hydrolase domain in the interval 6-149 (GYRPNVGIVI…KRDVYRRVMK (144 aa)). A Nudix box motif is present at residues 38-59 (GGINPGESAEQAMYRELFEEVG).

Belongs to the Nudix hydrolase family. RppH subfamily. Requires a divalent metal cation as cofactor.

Its function is as follows. Accelerates the degradation of transcripts by removing pyrophosphate from the 5'-end of triphosphorylated RNA, leading to a more labile monophosphorylated state that can stimulate subsequent ribonuclease cleavage. This is RNA pyrophosphohydrolase from Cronobacter sakazakii (strain ATCC BAA-894) (Enterobacter sakazakii).